We begin with the raw amino-acid sequence, 581 residues long: Leucine-rich repeat transmembrane neuronal protein 3 (581 aa).

An N-terminal signal peptide occupies residues 1-30; the sequence is MGFNVIRLLSGSAVALVIAPTVLLTMLSSA. Residues 31-61 enclose the LRRNT domain; that stretch reads ERGCPKGCRCEGKMVYCESQKLQEIPSSISA. The Extracellular segment spans residues 31–419; it reads ERGCPKGCRC…ADAEHISFHK (389 aa). LRR repeat units lie at residues 63-83, 86-107, 110-131, 134-155, 158-179, 182-203, 206-226, 230-251, 254-275, and 279-300; these read CLGL…QFKG, QLTW…AFNG, RLKE…TFRP, NLRN…QFRG, KLLS…IFQD, NLEL…VFAG, RLKE…ALFP, SLQN…MSWT, SLQR…SVFQ, and NLQR…ILDS. N126 is a glycosylation site (N-linked (GlcNAc...) asparagine). In terms of domain architecture, LRRCT spans 312 to 363; the sequence is NIWECSRNICSLVNWLKSFKGLRENTIICASPKELQGVNVIDAVKNYSICGK. N357 is a glycosylation site (N-linked (GlcNAc...) asparagine). The interval 377–408 is disordered; it reads KPTFKPKLPRPKHESKPPLPPTVGATEPGPET. A helical membrane pass occupies residues 420-440; the sequence is IIAGSVALFLSVLVILLVIYV. The Cytoplasmic portion of the chain corresponds to 441–581; the sequence is SWKRYPASMK…RISDHKQQLA (141 aa).

The protein belongs to the LRRTM family. As to expression, expressed in neuronal tissues.

The protein resides in the cell membrane. It is found in the postsynaptic cell membrane. In terms of biological role, exhibits a limited synaptogenic activity in vitro, restricted to excitatory presynaptic differentiation. May play a role in the development and maintenance of the vertebrate nervous system. In Homo sapiens (Human), this protein is Leucine-rich repeat transmembrane neuronal protein 3 (LRRTM3).